The primary structure comprises 360 residues: Cytokine receptor-like factor 2 (360 aa).

The N-terminal stretch at 1–18 (MRAVTWAIVAMLLPRVLG) is a signal peptide. Residues 27 to 238 (TGGVGDTLSV…PRTPGTPTPP (212 aa)) are Extracellular-facing. A glycan (N-linked (GlcNAc...) asparagine) is linked at Asn62. Cys77 and Cys90 form a disulfide bridge. Residues 123–214 (RPRPPWNVTL…PSKWTGVASL (92 aa)) enclose the Fibronectin type-III domain. 2 N-linked (GlcNAc...) asparagine glycosylation sites follow: Asn129 and Asn174. Cys185 and Cys223 are oxidised to a cystine. The WSXWS motif signature appears at 205–209 (PSKWT). Residues 239–259 (LALACGLAVALLTLVLLLALL) traverse the membrane as a helical segment. Over 260–360 (RMRRVKEALL…LMGDSGYTTL (101 aa)) the chain is Cytoplasmic. Positions 268–276 (LLPGVPDPR) match the Box 1 motif motif.

Belongs to the type I cytokine receptor family. Type 5 subfamily. In terms of assembly, heterodimer of CRLF2 and IL7R. As to expression, expressed in all tissues examined including brain, thymus, lung, heart, muscle, stomach, small intestine, liver, kidney, spleen, testis and skin. Highest levels in thymus, liver and testis.

It is found in the membrane. In terms of biological role, receptor for thymic stromal lymphopoietin (TSLP). Forms a functional complex with TSLP and IL7R which is capable of stimulating cell proliferation through activation of STAT3 and STAT5. Also activates JAK2. Implicated in the development of the hematopoietic system. The chain is Cytokine receptor-like factor 2 (Crlf2) from Rattus norvegicus (Rat).